Reading from the N-terminus, the 373-residue chain is XK-related protein 9 (373 aa).

The next 8 membrane-spanning stretches (helical) occupy residues 8 to 28 (FMMS…DIWV), 38 to 58 (YVFS…AQCF), 166 to 186 (AAIM…QVAL), 203 to 223 (ITYL…VVLL), 224 to 244 (LFLN…LGII), 256 to 276 (CISM…FTFF), 295 to 315 (VLGT…IFNP), and 318 to 338 (FIPI…FLIV).

This sequence belongs to the XK family. Undergoes proteolytic processing by caspase-3 (CASP3), caspase-6 (CASP6) and caspase-7 (CASP7) to generate the XK-related protein 9, processed form, leading to its activation.

The protein localises to the cell membrane. The catalysed reaction is a 1,2-diacyl-sn-glycero-3-phospho-L-serine(in) = a 1,2-diacyl-sn-glycero-3-phospho-L-serine(out). With respect to regulation, activated upon caspase cleavage to generate the XK-related protein 9, processed form. Does not act prior the onset of apoptosis. In terms of biological role, phospholipid scramblase that promotes phosphatidylserine exposure on apoptotic cell surface. Phosphatidylserine is a specific marker only present at the surface of apoptotic cells and acts as a specific signal for engulfment. The protein is XK-related protein 9 of Pan troglodytes (Chimpanzee).